Reading from the N-terminus, the 511-residue chain is Probable dolichyl pyrophosphate Glc1Man9GlcNAc2 alpha-1,3-glucosyltransferase (511 aa).

11 helical membrane-spanning segments follow: residues 4-24 (LFWH…PAYH), 94-112 (VYFQ…VLGV), 124-144 (DTQQ…LIFV), 151-171 (YNGL…RQRF), 210-230 (VVSA…PFAV), 300-320 (PAIT…PILV), 332-352 (LVFL…GWHV), 356-370 (AILM…LTLV), 377-394 (YAYV…PLLF), 432-452 (WLYM…SFLL), and 469-491 (YSAL…ISWG).

It belongs to the ALG6/ALG8 glucosyltransferase family.

Its subcellular location is the endoplasmic reticulum membrane. It catalyses the reaction an alpha-D-Glc-(1-&gt;3)-alpha-D-Man-(1-&gt;2)-alpha-D-Man-(1-&gt;2)-alpha-D-Man-(1-&gt;3)-[alpha-D-Man-(1-&gt;2)-alpha-D-Man-(1-&gt;3)-[alpha-D-Man-(1-&gt;2)-alpha-D-Man-(1-&gt;6)]-alpha-D-Man-(1-&gt;6)]-beta-D-Man-(1-&gt;4)-beta-D-GlcNAc-(1-&gt;4)-alpha-D-GlcNAc-diphospho-di-trans,poly-cis-dolichol + a di-trans,poly-cis-dolichyl beta-D-glucosyl phosphate = an alpha-D-Glc-(1-&gt;3)-alpha-D-Glc-(1-&gt;3)-alpha-D-Man-(1-&gt;2)-alpha-D-Man-(1-&gt;2)-alpha-D-Man-(1-&gt;3)-[alpha-D-Man-(1-&gt;2)-alpha-D-Man-(1-&gt;3)-[alpha-D-Man-(1-&gt;2)-alpha-D-Man-(1-&gt;6)]-alpha-D-Man-(1-&gt;6)]-beta-D-Man-(1-&gt;4)-beta-D-GlcNAc-(1-&gt;4)-alpha-D-GlcNAc-diphospho-di-trans,poly-cis-dolichol + a di-trans,poly-cis-dolichyl phosphate + H(+). The protein operates within protein modification; protein glycosylation. In terms of biological role, adds the second glucose residue to the lipid-linked oligosaccharide precursor for N-linked glycosylation. Transfers glucose from dolichyl phosphate glucose (Dol-P-Glc) onto the lipid-linked oligosaccharide Glc(1)Man(9)GlcNAc(2)-PP-Dol. Functions in developmental processes such as germband extension, the apical constriction of mesoderm precursor cells and ventral furrow formation in early embryogenesis prior to gastrulation. Involved in the glycosylation and intracellular distribution of shg (E-cadherin). Function in cell intercalation in the lateral epidermis during germband extension may be due to its effect on shg. In Drosophila melanogaster (Fruit fly), this protein is Probable dolichyl pyrophosphate Glc1Man9GlcNAc2 alpha-1,3-glucosyltransferase.